The following is a 160-amino-acid chain: Large ribosomal subunit protein uL16 (160 aa).

Residues 138 to 160 (KNLEAPSQEKTKNSKKSQEEVKQ) are disordered.

Belongs to the universal ribosomal protein uL16 family. In terms of assembly, part of the 50S ribosomal subunit.

Its function is as follows. Binds 23S rRNA and is also seen to make contacts with the A and possibly P site tRNAs. This chain is Large ribosomal subunit protein uL16, found in Prochlorococcus marinus (strain MIT 9215).